Reading from the N-terminus, the 1222-residue chain is Serine/threonine-protein kinase WNK4 (1222 aa).

Residues 1–17 show a composition bias toward polar residues; sequence MLAPRNTETGVPMSQTE. The tract at residues 1–165 is disordered; sequence MLAPRNTETG…DTETQAVATS (165 aa). Over residues 90-101 the composition is skewed to low complexity; the sequence is AGPTRSPPSSSK. Ser-95 is modified (phosphoserine). Over residues 135–152 the composition is skewed to basic and acidic residues; sequence EPPRVPDAAARERRREQE. Glycyl lysine isopeptide (Lys-Gly) (interchain with G-Cter in ubiquitin) cross-links involve residues Lys-154 and Lys-172. One can recognise a Protein kinase domain in the interval 171–429; sequence LKFDIEIGRG…IQDLLAHAFF (259 aa). Ser-181 contributes to the ATP binding site. Glycyl lysine isopeptide (Lys-Gly) (interchain with G-Cter in ubiquitin) cross-links involve residues Lys-183, Lys-223, and Lys-238. Residues 251-254 and Lys-301 each bind ATP; that span reads TELM. Residue Asp-318 is the Proton acceptor of the active site. Lys-325 is covalently cross-linked (Glycyl lysine isopeptide (Lys-Gly) (interchain with G-Cter in ubiquitin)). Ser-328 and Ser-332 each carry phosphoserine; by autocatalysis. Glycyl lysine isopeptide (Lys-Gly) (interchain with G-Cter in ubiquitin) cross-links involve residues Lys-384, Lys-390, Lys-447, and Lys-451. Residues 525–562 are disordered; it reads RELEVLPPDSGPPPATVSLAPGPPSAFPPEPEEPEADQ. Positions 533–553 are enriched in pro residues; that stretch reads DSGPPPATVSLAPGPPSAFPP. Positions 554 to 564 are interaction with KLHL3; that stretch reads EPEEPEADQHQ. Ser-572 is modified (phosphoserine). 4 disordered regions span residues 626-659, 747-809, 877-896, and 927-976; these read RSGP…MRKN, DAGP…GAPF, SYPQ…SPPS, and SPGL…AQPL. Composition is skewed to low complexity over residues 627 to 638, 757 to 769, 793 to 807, and 877 to 890; these read SGPGSDFSPGDS, ALSP…ALPA, STSP…SPGA, and SYPQ…SLPV. The segment covering 935–944 has biased composition (pro residues); the sequence is PPAPPGPLPS. Over residues 953 to 963 the composition is skewed to polar residues; that stretch reads DQESLSAQTAE. Lys-990 is covalently cross-linked (Glycyl lysine isopeptide (Lys-Gly) (interchain with G-Cter in ubiquitin)). The short motif at 996–999 is the RFXV motif element; it reads RFQV. The tract at residues 1000-1087 is disordered; sequence TSSKEPAEPP…SSPILSHPSP (88 aa). Ser-1014 carries the post-translational modification Phosphoserine. Low complexity predominate over residues 1014–1032; that stretch reads SPTLSRSLKLPSPPLTSES. Residues 1044–1056 are compositionally biased toward basic and acidic residues; the sequence is ETREALAESDRAA. Residues Lys-1123, Lys-1136, and Lys-1137 each participate in a glycyl lysine isopeptide (Lys-Gly) (interchain with G-Cter in ubiquitin) cross-link. The tract at residues 1166–1222 is disordered; that stretch reads RRLSKGSFPTSRRNSLQRSDLPGPGIMRRNSLSGSSTGSQEQRASKGVTFAGDIGRM. Composition is skewed to polar residues over residues 1172-1183 and 1195-1207; these read SFPTSRRNSLQR and NSLS…SQEQ. Ser-1196 bears the Phosphoserine mark.

It belongs to the protein kinase superfamily. Ser/Thr protein kinase family. WNK subfamily. In terms of assembly, interacts with the C-terminal region of KCNJ1. Interacts with WNK1 and WNK3. Interacts with KLHL3. Mg(2+) is required as a cofactor. Autophosphorylated at Ser-328 and Ser-332, promoting its activation. Phosphorylated by WNK1 and WNK3. Phosphorylated at Ser-572 in a MAP3K15/ASK3-dependent process in response to osmotic stress or hypotonic low-chloride stimulation. Post-translationally, ubiquitinated by the BCR(KLHL3) complex, leading to its degradation. Also ubiquitinated by the BCR(KLHL2) complex. Locates to the distal convoluted tubule, the medullary collecting duct and the cortical collecting duct of the kidney. Expressed in pancreatic duct.

Its subcellular location is the cell junction. The protein resides in the tight junction. It catalyses the reaction L-seryl-[protein] + ATP = O-phospho-L-seryl-[protein] + ADP + H(+). It carries out the reaction L-threonyl-[protein] + ATP = O-phospho-L-threonyl-[protein] + ADP + H(+). Activation requires autophosphorylation of Ser-328 and Ser-332. Autophosphorylation and subsequent activation is inhibited by increases in intracellular ionic strength: Cl(-) potently inhibits WNK4 kinase activity via direct binding. Also inhibited by K(+) ions. Its function is as follows. Serine/threonine-protein kinase component of the WNK4-SPAK/OSR1 kinase cascade, which acts as a key regulator of ion transport in the distal nephron and blood pressure. The WNK4-SPAK/OSR1 kinase cascade is composed of WNK4, which mediates phosphorylation and activation of downstream kinases OXSR1/OSR1 and STK39/SPAK. Following activation, OXSR1/OSR1 and STK39/SPAK catalyze phosphorylation of ion cotransporters, such as SLC12A1/NKCC2, SLC12A2/NKCC1, SLC12A3/NCC, SLC12A5/KCC2 or SLC12A6/KCC3, regulating their activity. Acts as a molecular switch that regulates the balance between renal salt reabsorption and K(+) secretion by modulating the activities of renal transporters and channels, including the Na-Cl cotransporter SLC12A3/NCC and the K(+) channel, KCNJ1/ROMK. Regulates NaCl reabsorption in the distal nephron by activating the thiazide-sensitive Na-Cl cotransporter SLC12A3/NCC in distal convoluted tubule cells of kidney: activates SLC12A3/NCC in a OXSR1/OSR1- and STK39/SPAK-dependent process. Also acts as a scaffold protein independently of its protein kinase activity: negatively regulates cell membrane localization of various transporters and channels (CFTR, KCNJ1/ROMK, SLC4A4, SLC26A9 and TRPV4) by clathrin-dependent endocytosis. Also inhibits the activity of the epithelial Na(+) channel (ENaC) SCNN1A, SCNN1B, SCNN1D in a inase-independent mechanism. May also phosphorylate NEDD4L. This Mus musculus (Mouse) protein is Serine/threonine-protein kinase WNK4.